The primary structure comprises 1415 residues: MNQELSTNPFNPVAPVKTFDEIKISLASPERILSWSYGEIKKPETINYRTFKPERDGLFCARIFGPIKDYECLCGKYKRMKYRGVVCEKCGVEVTLQKVRRERMGHIELAAPVAHIWFLKSLPSRIGLMLDMTLRDLERILYFENYVVIEPGLTDLTYGQLMTEEEFLDAQDQYGADAFTANIGAEAIREMLSAIDLEQTAETLREELKEATGELKPKKIIKRLKIVESFLESGNRPEWMILTVLPVIPPELRPLVPLDGGRFATSDLNDLYRRVINRNNRLKRLIELRAPDIIVRNEKRMLQEAVDALFDNGRRGRVITGTNKRPLKSLSDMLKGKQGRFRQNLLGKRVDFSGRSVIVTGPELKLHQCGLPKKMALELFKPFIYSRLEAKGLSSTVKQAKKLVEKERPEVWDILDEVIREHPVLLNRAPTLHRLGIQAFEPILIEGKAIQLHPLVCSAFNADFDGDQMAVHVPLSLEAQLEARVLMMSTNNVLSPANGAPIIVPSQDMVLGLYYTTMERRGMKGEGMAFSSVEEVEHALAAGEVHLHATITARIKQIDEEGNEVVKRYQTTPGRLRLGNLLPLNAKAPFELVNRLLRKKDVQNVIDTVYRYCGQKESVIFCDQIMGMGFREAFKAGISFGKDDMLIPDTKWPIVNEVRDQVKEFEQQYMDGLITQGEKYNKVVDAWSKCSDKVAGEMMAEISAVRYDDAGAEKEPNSVYMMSHSGARGSPAQMKQLGGMRGLMAKPNGEIIETPIISNFKEGLTVLEYFNSTHGARKGLADTALKTANSGYLTRRLVDVAQDCIVRTHDCGTENAITASAAVNEGEVVSPLAERVLGRVAAEDILVPGSDEVIVARGELIDERRADLVDQANVASVRIRSPLTCEAEEGVCAMCYGRDLARGTLVNIGEAVGIIAAQSIGEPGTQLTMRTFHIGGIAQGGQQSFLEASQEGRIEFRNPNLLENANGEQIVMGRNMQLAIIDEAGQERATHKLTYGAKVHVKDGQTVKRATRLFEWDPYTLPIIAEKAGVARFVDLVSGISVREDTDEATGMTQKIVSDWRSTPKGGDLKPEIIIMNPETGDPMRNEAGNPISYPMSVEAILSVEDGQTVRAGDVVARIPREGARTKDITGGLPRVAELFEARRPKDHAIIAENDGYVRFGKDYKNKRRITIEPVDDTLNSVEYMVPKGKHIPVQEGDFVQKGDYIMDGNPAPHDILRILGVEALANYMIDEVQEVYRLQGVKINDKHIEVIVRQMLQKYEILDSGETTLLKGEHVDKAELDEVNQKAMDHGMRPAHAEPILLGITKASLQTRSFISAASFQETTRVLTEASVQGKRDKLVGLKENVIVGRLIPAGTGGATSRVKKIAHDRDQKVIDTRRAEAESAAALAAPTDGVIDLGSEDSGLVETVENREE.

Residues Cys72, Cys74, Cys87, and Cys90 each coordinate Zn(2+). Residues Asp463, Asp465, and Asp467 each contribute to the Mg(2+) site. Zn(2+) contacts are provided by Cys811, Cys885, Cys892, and Cys895.

It belongs to the RNA polymerase beta' chain family. The RNAP catalytic core consists of 2 alpha, 1 beta, 1 beta' and 1 omega subunit. When a sigma factor is associated with the core the holoenzyme is formed, which can initiate transcription. Mg(2+) serves as cofactor. The cofactor is Zn(2+).

It carries out the reaction RNA(n) + a ribonucleoside 5'-triphosphate = RNA(n+1) + diphosphate. Its function is as follows. DNA-dependent RNA polymerase catalyzes the transcription of DNA into RNA using the four ribonucleoside triphosphates as substrates. This Cereibacter sphaeroides (strain ATCC 17023 / DSM 158 / JCM 6121 / CCUG 31486 / LMG 2827 / NBRC 12203 / NCIMB 8253 / ATH 2.4.1.) (Rhodobacter sphaeroides) protein is DNA-directed RNA polymerase subunit beta'.